A 316-amino-acid polypeptide reads, in one-letter code: Endochitinase WIN8 (316 aa).

The first 23 residues, 1 to 23, serve as a signal peptide directing secretion; the sequence is MRFWALTVLSLLLSLLLGVSSDT. Positions 24-64 constitute a Chitin-binding type-1 domain; it reads AQCGSQAGNATCPNDLCCSSGGYCGLTVAYCCAGCVSQCRN. Intrachain disulfides connect Cys26–Cys41, Cys35–Cys47, Cys40–Cys54, Cys58–Cys62, Cys84–Cys146, Cys158–Cys168, and Cys266–Cys298. Glu128 serves as the catalytic Proton donor.

Belongs to the glycosyl hydrolase 19 family. Chitinase class I subfamily.

It catalyses the reaction Random endo-hydrolysis of N-acetyl-beta-D-glucosaminide (1-&gt;4)-beta-linkages in chitin and chitodextrins.. Functionally, defense against chitin-containing fungal pathogens. This is Endochitinase WIN8 (WIN8) from Populus trichocarpa (Western balsam poplar).